Reading from the N-terminus, the 155-residue chain is Calmodulin, flagellar (155 aa).

EF-hand domains follow at residues 14-49 (EQIA…LGQN), 50-85 (PTEA…KMKD), 87-122 (DNEE…LGEK), and 123-155 (LTDE…MMQK). D27, D29, D31, T33, E38, D63, D65, N67, T69, E74, D100, D102, N104, E111, D136, D138, D140, Q142, and E147 together coordinate Ca(2+).

Belongs to the calmodulin family.

Its subcellular location is the cell projection. The protein localises to the cilium. It localises to the flagellum. Its function is as follows. Calmodulin mediates the control of a large number of enzymes, ion channels and other proteins by Ca(2+). Among the enzymes to be stimulated by the calmodulin-Ca(2+) complex are a number of protein kinases and phosphatases. The protein is Calmodulin, flagellar (CAM1) of Naegleria gruberi (Amoeba).